The following is an 874-amino-acid chain: Alanine--tRNA ligase (874 aa).

Residues His564, His568, Cys665, and His669 each contribute to the Zn(2+) site.

This sequence belongs to the class-II aminoacyl-tRNA synthetase family. Requires Zn(2+) as cofactor.

Its subcellular location is the cytoplasm. The enzyme catalyses tRNA(Ala) + L-alanine + ATP = L-alanyl-tRNA(Ala) + AMP + diphosphate. Functionally, catalyzes the attachment of alanine to tRNA(Ala) in a two-step reaction: alanine is first activated by ATP to form Ala-AMP and then transferred to the acceptor end of tRNA(Ala). Also edits incorrectly charged Ser-tRNA(Ala) and Gly-tRNA(Ala) via its editing domain. This is Alanine--tRNA ligase from Paraburkholderia phymatum (strain DSM 17167 / CIP 108236 / LMG 21445 / STM815) (Burkholderia phymatum).